Consider the following 163-residue polypeptide: S-ribosylhomocysteine lyase (163 aa).

Fe cation contacts are provided by His54, His58, and Cys128.

It belongs to the LuxS family. As to quaternary structure, homodimer. The cofactor is Fe cation.

It carries out the reaction S-(5-deoxy-D-ribos-5-yl)-L-homocysteine = (S)-4,5-dihydroxypentane-2,3-dione + L-homocysteine. Involved in the synthesis of autoinducer 2 (AI-2) which is secreted by bacteria and is used to communicate both the cell density and the metabolic potential of the environment. The regulation of gene expression in response to changes in cell density is called quorum sensing. Catalyzes the transformation of S-ribosylhomocysteine (RHC) to homocysteine (HC) and 4,5-dihydroxy-2,3-pentadione (DPD). The polypeptide is S-ribosylhomocysteine lyase (Wolinella succinogenes (strain ATCC 29543 / DSM 1740 / CCUG 13145 / JCM 31913 / LMG 7466 / NCTC 11488 / FDC 602W) (Vibrio succinogenes)).